The primary structure comprises 332 residues: NH(3)-dependent NAD(+) synthetase (332 aa).

Residue 48 to 55 coordinates ATP; it reads GLSGGVDS. D54 provides a ligand contact to Mg(2+). R184 provides a ligand contact to deamido-NAD(+). ATP is bound at residue T204. E209 is a Mg(2+) binding site. Residues K217 and D224 each contribute to the deamido-NAD(+) site. ATP contacts are provided by K233 and T255.

This sequence belongs to the NAD synthetase family. As to quaternary structure, homodimer.

It catalyses the reaction deamido-NAD(+) + NH4(+) + ATP = AMP + diphosphate + NAD(+) + H(+). Its pathway is cofactor biosynthesis; NAD(+) biosynthesis; NAD(+) from deamido-NAD(+) (ammonia route): step 1/1. Its function is as follows. Catalyzes the ATP-dependent amidation of deamido-NAD to form NAD. Uses ammonia as a nitrogen source. This is NH(3)-dependent NAD(+) synthetase from Rhizobium rhizogenes (strain K84 / ATCC BAA-868) (Agrobacterium radiobacter).